We begin with the raw amino-acid sequence, 483 residues long: MVRARTLMLQGTCSGAGKTALVAGLCRLLARHGVRVAPFKPQNMSNNAAVTADGGEIGRGQWLQALAAGLPAHTDMNPVLLKPEAERTAQVVVQGHVTGRLEARAFREARQPLLPPVLESFQRLCAAYDVVLVEGAGSPAEPNLRQGDIANMGFAEAADVPVWLVGDIDRGGVFASLLGTLEWLDDADRRRVEALIINRFRGSPELLGEAPAQLEARGGVPVIGVVPAVPDLHLPEEDAPYRMAGPRGSGGALQVVAVAYPRMSNHDDLDALDAESGVHVRFARQPRELDGADLIVLPGSKHVFSDLAWLRESGMAEALYRHCRYGGRVVGLCGGLQMLGEGIEDPEGVEGGGSAPGLGLLPVHTRLAPTKQLAEVHGHAEWPAPVAVTGYEIHHGVTGAQEGLFPFVARSDDGRVLGSYLHRLFDSGPFRRALLVEWFALEGEGGDEQARIEAELDRLADTLEQALEPGWLKALGVPARPST.

Residues 252–430 (ALQVVAVAYP…LHRLFDSGPF (179 aa)) enclose the GATase cobBQ-type domain. The active-site Nucleophile is the Cys-333. His-422 is a catalytic residue.

It belongs to the CobB/CobQ family. CobQ subfamily.

The protein operates within cofactor biosynthesis; adenosylcobalamin biosynthesis. In terms of biological role, catalyzes amidations at positions B, D, E, and G on adenosylcobyrinic A,C-diamide. NH(2) groups are provided by glutamine, and one molecule of ATP is hydrogenolyzed for each amidation. In Halorhodospira halophila (strain DSM 244 / SL1) (Ectothiorhodospira halophila (strain DSM 244 / SL1)), this protein is Cobyric acid synthase.